Reading from the N-terminus, the 230-residue chain is Type II restriction enzyme MjaV (230 aa).

It carries out the reaction Endonucleolytic cleavage of DNA to give specific double-stranded fragments with terminal 5'-phosphates.. Functionally, a P subtype restriction enzyme that recognizes the double-stranded sequence 5'-GTAC-3'; the cleavage site is unknown. This chain is Type II restriction enzyme MjaV (mjaVR), found in Methanocaldococcus jannaschii (strain ATCC 43067 / DSM 2661 / JAL-1 / JCM 10045 / NBRC 100440) (Methanococcus jannaschii).